We begin with the raw amino-acid sequence, 453 residues long: tRNA modification GTPase MnmE (453 aa).

Residues R22, E79, and K119 each contribute to the (6S)-5-formyl-5,6,7,8-tetrahydrofolate site. Residues 215–376 (GMKVVIAGRP…LQQHLKSLMG (162 aa)) form the TrmE-type G domain. N225 contributes to the K(+) binding site. GTP-binding positions include 225-230 (NAGKSS), 244-250 (TEIAGTT), 269-272 (DTAG), and 334-337 (NKAD). S229 is a binding site for Mg(2+). K(+) is bound by residues T244, I246, and T249. T250 is a Mg(2+) binding site. K453 provides a ligand contact to (6S)-5-formyl-5,6,7,8-tetrahydrofolate.

Belongs to the TRAFAC class TrmE-Era-EngA-EngB-Septin-like GTPase superfamily. TrmE GTPase family. Homodimer. Heterotetramer of two MnmE and two MnmG subunits. K(+) serves as cofactor.

The protein resides in the cytoplasm. In terms of biological role, exhibits a very high intrinsic GTPase hydrolysis rate. Involved in the addition of a carboxymethylaminomethyl (cmnm) group at the wobble position (U34) of certain tRNAs, forming tRNA-cmnm(5)s(2)U34. The sequence is that of tRNA modification GTPase MnmE from Shewanella woodyi (strain ATCC 51908 / MS32).